The following is a 585-amino-acid chain: Arginine--tRNA ligase (585 aa).

The short motif at 131-141 (ANPTGPMHVGH) is the 'HIGH' region element.

Belongs to the class-I aminoacyl-tRNA synthetase family. As to quaternary structure, monomer.

It localises to the cytoplasm. The enzyme catalyses tRNA(Arg) + L-arginine + ATP = L-arginyl-tRNA(Arg) + AMP + diphosphate. The protein is Arginine--tRNA ligase of Brucella ovis (strain ATCC 25840 / 63/290 / NCTC 10512).